Here is a 529-residue protein sequence, read N- to C-terminus: Peptide chain release factor 3 (529 aa).

The tr-type G domain occupies 11–280 (AKRRTFAIIS…GLVAWAPAPM (270 aa)). Residues 20 to 27 (SHPDAGKT), 88 to 92 (DTPGH), and 142 to 145 (NKLD) contribute to the GTP site.

This sequence belongs to the TRAFAC class translation factor GTPase superfamily. Classic translation factor GTPase family. PrfC subfamily.

Its subcellular location is the cytoplasm. In terms of biological role, increases the formation of ribosomal termination complexes and stimulates activities of RF-1 and RF-2. It binds guanine nucleotides and has strong preference for UGA stop codons. It may interact directly with the ribosome. The stimulation of RF-1 and RF-2 is significantly reduced by GTP and GDP, but not by GMP. The chain is Peptide chain release factor 3 from Salmonella gallinarum (strain 287/91 / NCTC 13346).